The following is a 261-amino-acid chain: tRNA U34 carboxymethyltransferase (261 aa).

Residues Lys25, Trp39, Lys44, Gly63, 114–115, Tyr135, and Arg250 each bind carboxy-S-adenosyl-L-methionine; that span reads VE.

This sequence belongs to the class I-like SAM-binding methyltransferase superfamily. CmoB family. Homotetramer.

The enzyme catalyses carboxy-S-adenosyl-L-methionine + 5-hydroxyuridine(34) in tRNA = 5-carboxymethoxyuridine(34) in tRNA + S-adenosyl-L-homocysteine + H(+). Functionally, catalyzes carboxymethyl transfer from carboxy-S-adenosyl-L-methionine (Cx-SAM) to 5-hydroxyuridine (ho5U) to form 5-carboxymethoxyuridine (cmo5U) at position 34 in tRNAs. The protein is tRNA U34 carboxymethyltransferase of Helicobacter pylori (strain HPAG1).